Here is a 249-residue protein sequence, read N- to C-terminus: tRNA pseudouridine synthase A (249 aa).

Residue D52 is the Nucleophile of the active site. Residue Y110 coordinates substrate.

This sequence belongs to the tRNA pseudouridine synthase TruA family. In terms of assembly, homodimer.

It catalyses the reaction uridine(38/39/40) in tRNA = pseudouridine(38/39/40) in tRNA. In terms of biological role, formation of pseudouridine at positions 38, 39 and 40 in the anticodon stem and loop of transfer RNAs. The protein is tRNA pseudouridine synthase A of Exiguobacterium sibiricum (strain DSM 17290 / CCUG 55495 / CIP 109462 / JCM 13490 / 255-15).